The primary structure comprises 149 residues: 3-dehydroquinate dehydratase (149 aa).

The active-site Proton acceptor is the Y22. Substrate contacts are provided by N73, H79, and D86. H99 functions as the Proton donor in the catalytic mechanism. Substrate is bound by residues 100-101 (LS) and R110.

It belongs to the type-II 3-dehydroquinase family. Homododecamer.

The enzyme catalyses 3-dehydroquinate = 3-dehydroshikimate + H2O. The protein operates within metabolic intermediate biosynthesis; chorismate biosynthesis; chorismate from D-erythrose 4-phosphate and phosphoenolpyruvate: step 3/7. Catalyzes a trans-dehydration via an enolate intermediate. This Prochlorococcus marinus (strain MIT 9313) protein is 3-dehydroquinate dehydratase.